Here is a 75-residue protein sequence, read N- to C-terminus: Conotoxin Vc6a (75 aa).

Positions 1 to 22 are cleaved as a signal peptide; it reads MKLTCVVIVAVLFLTANTFATA. Positions 23–49 are excised as a propeptide; that stretch reads DDPRNGLENLFLKAHHEMNPEASKLNE. Intrachain disulfides connect cysteine 51–cysteine 66, cysteine 58–cysteine 69, and cysteine 65–cysteine 74.

In terms of tissue distribution, expressed by the venom duct.

The protein resides in the secreted. In Conus victoriae (Queen Victoria cone), this protein is Conotoxin Vc6a.